A 607-amino-acid polypeptide reads, in one-letter code: DNA primase (607 aa).

The segment at 39–63 adopts a CHC2-type zinc-finger fold; the sequence is CPFHDDKNPSMSISSSKNIFKCWAC. One can recognise a Toprim domain in the interval 267–350; it reads NQLFIVEGYF…IVEIVQWEHN (84 aa). Residues E273, D319, and D321 each contribute to the Mg(2+) site.

This sequence belongs to the DnaG primase family. In terms of assembly, monomer. Interacts with DnaB. Zn(2+) serves as cofactor. The cofactor is Mg(2+).

It catalyses the reaction ssDNA + n NTP = ssDNA/pppN(pN)n-1 hybrid + (n-1) diphosphate.. Functionally, RNA polymerase that catalyzes the synthesis of short RNA molecules used as primers for DNA polymerase during DNA replication. The sequence is that of DNA primase from Mycoplasma genitalium (strain ATCC 33530 / DSM 19775 / NCTC 10195 / G37) (Mycoplasmoides genitalium).